Consider the following 297-residue polypeptide: Probable esterase afoC (297 aa).

Serine 136 acts as the Charge relay system in catalysis. Residues 204–217 show a composition bias toward low complexity; the sequence is ASSSASASVSGSES. The segment at 204–226 is disordered; the sequence is ASSSASASVSGSESAGEEEEDGH. Residues aspartate 240 and histidine 267 each act as charge relay system in the active site.

The protein belongs to the LovG family.

Its function is as follows. Probable esterase; part of the gene cluster that mediates the biosynthesis of asperfuranone, a probable antitumor agent. The polyketide synthase afoG is responsible for producing the 3,5-dimethyloctadienone moiety from acetyl-CoA, three malonyl-CoA, and two S-adenosyl methionines (SAM). The 3,5-dimethyloctadienone moiety is then loaded onto the SAT domain of afoE and extended with four malonyl-CoA and one SAM, which leads to the formation of 2,4-dihydroxy-6-(5,7-dimethyl-2-oxo-trans-3-trans-5-nonadienyl)-3-methylbenzaldehyde (compound 2) after reductive release and aldol condensation. AfoD is the next enzyme in the biosynthesis sequence and hydroxylates the side chain at the benzylic position of compound 2. After benzylic hydroxylation, a furan ring is formed after five-member ring hemiacetal formation and water elimination. AfoF and afoC are proposed to oxidize the R-diketone proton and to reduce the unconjugated carbonyl group, respectively, to generate asperfuranone. Since no intermediates could be isolated from afoF and afoC deletants, the sequence of these two enzymes is not fully understood. Moreover, since afoC deletant still produces a small amount of asperfuranone, other endogenous oxidoreductases might catalyze the same reaction with much less efficiency. The polypeptide is Probable esterase afoC (Emericella nidulans (strain FGSC A4 / ATCC 38163 / CBS 112.46 / NRRL 194 / M139) (Aspergillus nidulans)).